Reading from the N-terminus, the 375-residue chain is Erythronate-4-phosphate dehydrogenase (375 aa).

Substrate-binding residues include S45 and T66. Positions 146 and 175 each coordinate NAD(+). R208 is an active-site residue. D232 serves as a coordination point for NAD(+). E237 is an active-site residue. Catalysis depends on H254, which acts as the Proton donor. G257 lines the NAD(+) pocket. Y258 contributes to the substrate binding site.

This sequence belongs to the D-isomer specific 2-hydroxyacid dehydrogenase family. PdxB subfamily. In terms of assembly, homodimer.

Its subcellular location is the cytoplasm. The catalysed reaction is 4-phospho-D-erythronate + NAD(+) = (R)-3-hydroxy-2-oxo-4-phosphooxybutanoate + NADH + H(+). It participates in cofactor biosynthesis; pyridoxine 5'-phosphate biosynthesis; pyridoxine 5'-phosphate from D-erythrose 4-phosphate: step 2/5. Its function is as follows. Catalyzes the oxidation of erythronate-4-phosphate to 3-hydroxy-2-oxo-4-phosphonooxybutanoate. In Edwardsiella ictaluri (strain 93-146), this protein is Erythronate-4-phosphate dehydrogenase.